The primary structure comprises 265 residues: Homeobox protein Nkx-6.3 (265 aa).

Residues 139 to 198 (KKHTRPTFTGHQIFALEKTFEQTKYLAGPERARLAYSLGMTESQVKVWFQNRRTKWRKKS) constitute a DNA-binding region (homeobox). The tract at residues 196–240 (KKSALEPSSSTPRAPGGAGAGAGGDRAPSENEDDEYNKPLDPDSD) is disordered.

Its subcellular location is the nucleus. Functionally, putative transcription factor, which may be involved in patterning of central nervous system and pancreas. The sequence is that of Homeobox protein Nkx-6.3 (NKX6-3) from Homo sapiens (Human).